Consider the following 552-residue polypeptide: Gamma-aminobutyric acid receptor subunit alpha-4 (552 aa).

The signal sequence occupies residues 1 to 35 (MVSVQKVPAIVLCSGVSLALLHVLCLATCLNESPG). Residues 36–259 (QNSKDEKLCP…FHLRRKMGYF (224 aa)) are Extracellular-facing. The N-linked (GlcNAc...) asparagine glycan is linked to Asn47. 4-aminobutanoate is bound at residue Arg100. 2 N-linked (GlcNAc...) asparagine glycosylation sites follow: Asn144 and Asn157. Residue Thr163 coordinates 4-aminobutanoate. Cys172 and Cys186 are joined by a disulfide. The chain crosses the membrane as a helical span at residues 260–280 (MIQTYIPCIMTVILSQVSFWI). At 281-284 (NKES) the chain is on the cytoplasmic side. A helical transmembrane segment spans residues 285–305 (VPARTVFGITTVLTMTTLSIS). The Extracellular portion of the chain corresponds to 306–318 (ARHSLPKVSYATA). A helical membrane pass occupies residues 319–341 (MDWFIAVCFAFVFSALIEFAAVN). Residues 342–515 (YFTNIQMQKA…PPPSGSGTSK (174 aa)) lie on the Cytoplasmic side of the membrane. Disordered regions lie at residues 353–436 (KKIS…NPFS), 448–470 (ARGL…PLRS), and 486–513 (TTVN…GSGT). Polar residues predominate over residues 403–423 (RTEVGNHSSKTTAAQESSETT). Low complexity-rich tracts occupy residues 448–458 (ARGLSSAASPS) and 486–499 (TTVN…NVSA). Positions 500 to 509 (TPPPSAPPPS) are enriched in pro residues. Residues 516–538 (IDKYARILFPVTFGAFNMVYWVV) form a helical membrane-spanning segment. Topologically, residues 539–552 (YLSKDTMEKSESLM) are extracellular.

It belongs to the ligand-gated ion channel (TC 1.A.9) family. Gamma-aminobutyric acid receptor (TC 1.A.9.5) subfamily. GABRA4 sub-subfamily. Heteropentamer, formed by a combination of alpha (GABRA1-6), beta (GABRB1-3), gamma (GABRG1-3), delta (GABRD), epsilon (GABRE), rho (GABRR1-3), pi (GABRP) and theta (GABRQ) chains, each subunit exhibiting distinct physiological and pharmacological properties. In terms of tissue distribution, expressed in the brain.

The protein resides in the cell membrane. It localises to the postsynaptic cell membrane. Potentiated by histamine. In terms of biological role, alpha subunit of the heteropentameric ligand-gated chloride channel gated by gamma-aminobutyric acid (GABA), a major inhibitory neurotransmitter in the brain. GABA-gated chloride channels, also named GABA(A) receptors (GABAAR), consist of five subunits arranged around a central pore and contain GABA active binding site(s) located at the alpha and beta subunit interface(s). Alpha-4/GABRA4 subunit often assembles with delta or gamma-2 subunits, in combination with beta subunits. When activated by GABA, GABAARs selectively allow the flow of chloride anions across the cell membrane down their electrochemical gradient. GABAARs containing alpha-4 are predominantly extrasynaptic, contributing to tonic inhibition in dentate granule cells and thalamic relay neurons. Extrasynaptic alpha-4-containing GABAARs control levels of excitability and network activity. GABAAR containing alpha-4-beta-3-delta subunits can simultaneously bind GABA and histamine where histamine binds at the interface of two neighboring beta subunits, which may be involved in the regulation of sleep and wakefulness. In Rattus norvegicus (Rat), this protein is Gamma-aminobutyric acid receptor subunit alpha-4.